The primary structure comprises 259 residues: 5'-nucleotidase SurE (259 aa).

A divalent metal cation contacts are provided by Asp-8, Asp-9, Ser-40, and Asn-92.

It belongs to the SurE nucleotidase family. The cofactor is a divalent metal cation.

The protein localises to the cytoplasm. It catalyses the reaction a ribonucleoside 5'-phosphate + H2O = a ribonucleoside + phosphate. Nucleotidase that shows phosphatase activity on nucleoside 5'-monophosphates. This is 5'-nucleotidase SurE from Xanthomonas axonopodis pv. citri (strain 306).